We begin with the raw amino-acid sequence, 341 residues long: tRNA N6-adenosine threonylcarbamoyltransferase (341 aa).

Fe cation contacts are provided by His111 and His115. Residues 134–138, Asp167, Gly180, and Asn272 each bind substrate; that span reads LVSGG. Asp300 is a Fe cation binding site.

Belongs to the KAE1 / TsaD family. Fe(2+) serves as cofactor.

The protein localises to the cytoplasm. The enzyme catalyses L-threonylcarbamoyladenylate + adenosine(37) in tRNA = N(6)-L-threonylcarbamoyladenosine(37) in tRNA + AMP + H(+). In terms of biological role, required for the formation of a threonylcarbamoyl group on adenosine at position 37 (t(6)A37) in tRNAs that read codons beginning with adenine. Is involved in the transfer of the threonylcarbamoyl moiety of threonylcarbamoyl-AMP (TC-AMP) to the N6 group of A37, together with TsaE and TsaB. TsaD likely plays a direct catalytic role in this reaction. The protein is tRNA N6-adenosine threonylcarbamoyltransferase of Psychromonas ingrahamii (strain DSM 17664 / CCUG 51855 / 37).